The chain runs to 225 residues: Urease accessory protein UreG 2 (225 aa).

Residue 31–38 (GPVGSGKT) coordinates GTP.

Belongs to the SIMIBI class G3E GTPase family. UreG subfamily. Homodimer. UreD, UreF and UreG form a complex that acts as a GTP-hydrolysis-dependent molecular chaperone, activating the urease apoprotein by helping to assemble the nickel containing metallocenter of UreC. The UreE protein probably delivers the nickel.

Its subcellular location is the cytoplasm. Functionally, facilitates the functional incorporation of the urease nickel metallocenter. This process requires GTP hydrolysis, probably effectuated by UreG. The polypeptide is Urease accessory protein UreG 2 (Streptomyces griseus subsp. griseus (strain JCM 4626 / CBS 651.72 / NBRC 13350 / KCC S-0626 / ISP 5235)).